Consider the following 203-residue polypeptide: Small ribosomal subunit protein uS4 (203 aa).

Residues 93-156 enclose the S4 RNA-binding domain; it reads RRLDNVVYRL…LKVPAILEAV (64 aa).

Belongs to the universal ribosomal protein uS4 family. As to quaternary structure, part of the 30S ribosomal subunit. Contacts protein S5. The interaction surface between S4 and S5 is involved in control of translational fidelity.

One of the primary rRNA binding proteins, it binds directly to 16S rRNA where it nucleates assembly of the body of the 30S subunit. Its function is as follows. With S5 and S12 plays an important role in translational accuracy. The sequence is that of Small ribosomal subunit protein uS4 from Streptococcus gordonii (strain Challis / ATCC 35105 / BCRC 15272 / CH1 / DL1 / V288).